Consider the following 271-residue polypeptide: Mannosyl-3-phosphoglycerate phosphatase (271 aa).

Catalysis depends on Asp13, which acts as the Nucleophile. Residues Asp13, Asp15, and Asp214 each coordinate Mg(2+).

This sequence belongs to the HAD-like hydrolase superfamily. MPGP family. It depends on Mg(2+) as a cofactor.

Its subcellular location is the cytoplasm. It catalyses the reaction 2-O-(alpha-D-mannosyl)-3-phosphoglycerate + H2O = (2R)-2-O-(alpha-D-mannosyl)-glycerate + phosphate. This is Mannosyl-3-phosphoglycerate phosphatase (yedP) from Shigella boydii serotype 4 (strain Sb227).